The sequence spans 189 residues: Chitin synthase 1 (189 aa).

This sequence belongs to the chitin synthase family. Class I subfamily.

The protein localises to the cell membrane. The enzyme catalyses [(1-&gt;4)-N-acetyl-beta-D-glucosaminyl](n) + UDP-N-acetyl-alpha-D-glucosamine = [(1-&gt;4)-N-acetyl-beta-D-glucosaminyl](n+1) + UDP + H(+). Its function is as follows. Polymerizes chitin, a structural polymer of the cell wall and septum, by transferring the sugar moiety of UDP-GlcNAc to the non-reducing end of the growing chitin polymer. This Botryotinia fuckeliana (Noble rot fungus) protein is Chitin synthase 1 (chs1).